The sequence spans 292 residues: Protoheme IX farnesyltransferase (292 aa).

A run of 9 helical transmembrane segments spans residues 12-32, 43-63, 94-114, 115-135, 144-164, 169-189, 216-236, 239-259, and 267-287; these read ITWL…PQAS, LLRL…TAAL, LAFG…GVNL, LSAG…TPMK, VGAI…AGGL, WVLF…IAWM, IVIY…LGMS, LYLV…VRVA, and ARGV…LMLL.

It belongs to the UbiA prenyltransferase family. Protoheme IX farnesyltransferase subfamily.

The protein localises to the cell inner membrane. It catalyses the reaction heme b + (2E,6E)-farnesyl diphosphate + H2O = Fe(II)-heme o + diphosphate. Its pathway is porphyrin-containing compound metabolism; heme O biosynthesis; heme O from protoheme: step 1/1. Its function is as follows. Converts heme B (protoheme IX) to heme O by substitution of the vinyl group on carbon 2 of heme B porphyrin ring with a hydroxyethyl farnesyl side group. The polypeptide is Protoheme IX farnesyltransferase (Solibacter usitatus (strain Ellin6076)).